We begin with the raw amino-acid sequence, 78 residues long: Small ribosomal subunit protein bS18 (78 aa).

Belongs to the bacterial ribosomal protein bS18 family. Part of the 30S ribosomal subunit. Forms a tight heterodimer with protein bS6.

Functionally, binds as a heterodimer with protein bS6 to the central domain of the 16S rRNA, where it helps stabilize the platform of the 30S subunit. The polypeptide is Small ribosomal subunit protein bS18 (Thermobifida fusca (strain YX)).